A 186-amino-acid chain; its full sequence is MINRSAGKDRDRSRSGDKELRINHKIKAREVRVIFDDGTQSVLPIEDAMRCARDAELDLVEVSPNVLPPVCKIIDYGKYKFHQGKRQKEQRKNQKIIKLKEVRMQPKIDTHDLDFKYRNILGFLKEGNKVKVTIRFRGRELAHTHLGYGILEGILERIGDANYILESPAKMEGKTMFLVIAPKSKK.

The segment at Met-1 to Leu-20 is disordered.

This sequence belongs to the IF-3 family. Monomer.

Its subcellular location is the cytoplasm. Functionally, IF-3 binds to the 30S ribosomal subunit and shifts the equilibrium between 70S ribosomes and their 50S and 30S subunits in favor of the free subunits, thus enhancing the availability of 30S subunits on which protein synthesis initiation begins. This is Translation initiation factor IF-3 from Borrelia hermsii (strain HS1 / DAH).